Consider the following 440-residue polypeptide: Ribulose bisphosphate carboxylase large chain (440 aa).

Lys-4 bears the N6,N6,N6-trimethyllysine mark. Asn-113 and Thr-163 together coordinate substrate. Lys-165 serves as the catalytic Proton acceptor. Position 167 (Lys-167) interacts with substrate. Lys-191, Asp-193, and Glu-194 together coordinate Mg(2+). The residue at position 191 (Lys-191) is an N6-carboxylysine. His-284 (proton acceptor) is an active-site residue. Substrate is bound by residues Arg-285, His-317, and Ser-369.

The protein belongs to the RuBisCO large chain family. Type I subfamily. Heterohexadecamer of 8 large chains and 8 small chains; disulfide-linked. The disulfide link is formed within the large subunit homodimers. It depends on Mg(2+) as a cofactor. In terms of processing, the disulfide bond which can form in the large chain dimeric partners within the hexadecamer appears to be associated with oxidative stress and protein turnover.

It localises to the plastid. The protein localises to the chloroplast. It catalyses the reaction 2 (2R)-3-phosphoglycerate + 2 H(+) = D-ribulose 1,5-bisphosphate + CO2 + H2O. The catalysed reaction is D-ribulose 1,5-bisphosphate + O2 = 2-phosphoglycolate + (2R)-3-phosphoglycerate + 2 H(+). Its function is as follows. RuBisCO catalyzes two reactions: the carboxylation of D-ribulose 1,5-bisphosphate, the primary event in carbon dioxide fixation, as well as the oxidative fragmentation of the pentose substrate in the photorespiration process. Both reactions occur simultaneously and in competition at the same active site. This is Ribulose bisphosphate carboxylase large chain from Ptychomitrium gardneri (Gardner's ptychomitrium moss).